Here is a 159-residue protein sequence, read N- to C-terminus: MEKLRRVLSGQDDEEQGLTAQVLDASSLSFNTRLKWFAICFVCGVFFSILGTGLLWLPGGIKLFAVFYTLGNLAALASTCFLMGPVKQLKKMFEATRLLATIVMLLCFIFTLCAALWWHKKGLAVLFCILQFLSMTWYSLSYIPYARDAVIKCCSSLLS.

Residues Met-1–Trp-36 are Cytoplasmic-facing. The residue at position 9 (Ser-9) is a Phosphoserine. A helical membrane pass occupies residues Phe-37–Leu-57. Over Pro-58–Lys-62 the chain is Lumenal. Residues Leu-63–Met-83 traverse the membrane as a helical segment. The Cytoplasmic segment spans residues Gly-84 to Arg-97. The chain crosses the membrane as a helical span at residues Leu-98–Trp-118. The Lumenal portion of the chain corresponds to His-119 to Gly-122. A helical membrane pass occupies residues Leu-123–Ile-143. Residues Pro-144 to Ser-159 are Cytoplasmic-facing.

The protein belongs to the SFT2 family.

It is found in the membrane. May be involved in fusion of retrograde transport vesicles derived from an endocytic compartment with the Golgi complex. This Homo sapiens (Human) protein is Vesicle transport protein SFT2A.